Here is a 644-residue protein sequence, read N- to C-terminus: Translation factor guf1, mitochondrial (644 aa).

Residues 1 to 31 constitute a mitochondrion transit peptide; sequence MTLRRFSYTFQARILRGLQARPVFVLPSRSH. The tr-type G domain maps to 51–232; sequence VNIRNWAIIS…AIIQRVPHPI (182 aa). Residues 60-67, 125-129, and 179-182 each bind GTP; these read SHIDHGKS, DTPGH, and NKID.

This sequence belongs to the TRAFAC class translation factor GTPase superfamily. Classic translation factor GTPase family. LepA subfamily.

Its subcellular location is the mitochondrion inner membrane. The enzyme catalyses GTP + H2O = GDP + phosphate + H(+). Functionally, promotes mitochondrial protein synthesis. May act as a fidelity factor of the translation reaction, by catalyzing a one-codon backward translocation of tRNAs on improperly translocated ribosomes. Binds to mitochondrial ribosomes in a GTP-dependent manner. The sequence is that of Translation factor guf1, mitochondrial (guf1) from Schizosaccharomyces japonicus (strain yFS275 / FY16936) (Fission yeast).